The sequence spans 185 residues: MENTTRTWVFPKLDTRQFVLLAMLMALHMVLSRLTVGTNVLQVSFAFVTMSLIAKWYGPLWSMLIAAILDVIGATIINPGAFFVGFTFTAMISALIYSLAYFKHDKTSWWRVSVAVGLVLLIANIGLNSIWLVMMYHTAHDWPSFLAFITPRVIKNLIMFPIQVGISYFLLNNQVISHTTKKIFS.

The next 4 membrane-spanning stretches (helical) occupy residues 34–54, 64–84, 114–134, and 157–177; these read LTVGTNVLQVSFAFVTMSLIA, LIAAILDVIGATIINPGAFFV, VAVGLVLLIANIGLNSIWLVM, and LIMFPIQVGISYFLLNNQVIS.

In E.coli forms a stable energy-coupling factor (ECF) transporter complex probably composed of a membrane-embedded substrate-binding protein (S component), two ATP-binding proteins (A components) and a transmembrane protein (T component).

It is found in the cell membrane. Functionally, folate-binding protein that interacts with the energy-coupling factor (ECF) ABC-transporter complex. Unlike classic ABC transporters this ECF transporter provides the energy necessary to transport a number of different substrates. The substrates themselves are bound by transmembrane, not extracytoplasmic soluble proteins. Upon coexpression with EcfA1A2T in E.coli allows 5-formyltetrahydrofolate uptake; uptake requires both FolT and EcfA1A2T. The protein is Folate transporter FolT (folT) of Leuconostoc mesenteroides subsp. mesenteroides (strain ATCC 8293 / DSM 20343 / BCRC 11652 / CCM 1803 / JCM 6124 / NCDO 523 / NBRC 100496 / NCIMB 8023 / NCTC 12954 / NRRL B-1118 / 37Y).